The sequence spans 929 residues: MKLRFIRSAGWLFLLFCLACNARADLPPLSSKPEQGRATPSGEGDDKPVVIDTERIRGHHEYESGTRSESELRSRSTISTDQIKKPNQKADPAAKDTPSAPQQNYTLSPAIKTDSRTGTSAQESEKAESMVLPGGVERLPGPAAEEGEPRLRTRTQSAPRTLSAQKRGEKPAKTPAPAEADQDRPGFAEGERIGGHREEAGDEKLRLAGETEPEAIEQKLAEAEAETDKQSPVFVVADRLQGHVEEEIEAIGKAELSAGPQFISAERMKYNQGTNDAEAQGNVRVEKEGDILEGSDLKFNLLSKTGQLSEPSYRLKDASSRGYAGMLLFEGENQYRLQKASYTTCPVGDDSWVLQVADLKLDNDKKVGTAKNVKLTFKDVPILYTPWMNFSYSGERKSGLLAPTYGTGSRTGLELAVPFYWNIAPNYDATFSARLMSKRGLAINNEFRFLGQNSSSNLLADIVPRDLDTQTTRWRTSFWHNHYLGAGFSARLDYNRVSDATYFRDFGNNLNLTSRTNLLQQGLLSYNRGLGDDGTFNVTSLVQSFQTIQDPLAAIVVPYKRLPQVGLNANKPDVFGTGVDVNLSGSWTNFSHPTLVNGSRTVLFPSMSYPLRNSFGFITPKVGMHYTRYSLGEGAGVSEENPTRTLPIFSLDSGLAFDRKMSLGGESFTQTLEPRVFYVYVPFRAQDQLPNFDSAKTDFSFAQMLAENRFSGSDRINDANQVTFALTTRLLESSTGRERLRLAVGHQLSFIDRRITLETPQTIDRRPDFIAAVSGFLTPTISTDTSFQFDQTRLLADVVRSGVSYRPEPGRVLNFGYRFTRDVLHQVDASSQWRWSERWQTVARLNYSLQDKRILEGLAGVEYNACCWSLRFVLQHLTLATQKSTTAAFLQLELNGLMQIGSNPLTVLQRSIPGYIRTGSQGSGLIEGP.

An N-terminal signal peptide occupies residues 1-24 (MKLRFIRSAGWLFLLFCLACNARA). The tract at residues 26–208 (LPPLSSKPEQ…EAGDEKLRLA (183 aa)) is disordered. Over residues 44 to 74 (GDDKPVVIDTERIRGHHEYESGTRSESELRS) the composition is skewed to basic and acidic residues. The span at 154–164 (RTQSAPRTLSA) shows a compositional bias: polar residues. Over residues 181–208 (DQDRPGFAEGERIGGHREEAGDEKLRLA) the composition is skewed to basic and acidic residues.

It belongs to the LptD family. In terms of assembly, component of the lipopolysaccharide transport and assembly complex. Interacts with LptE and LptA.

Its subcellular location is the cell outer membrane. Its function is as follows. Together with LptE, is involved in the assembly of lipopolysaccharide (LPS) at the surface of the outer membrane. This is LPS-assembly protein LptD from Nitrosospira multiformis (strain ATCC 25196 / NCIMB 11849 / C 71).